A 448-amino-acid chain; its full sequence is Acyl-lipid (9-3)-desaturase (448 aa).

Positions 6 to 90 (KKYITSDELK…LKDYSVSEVS (85 aa)) constitute a Cytochrome b5 heme-binding domain. The heme site is built by H41 and H64. Helical transmembrane passes span 112–132 (IMFA…YGVL) and 137–157 (VLVH…SGWI). The Histidine box-1 signature appears at 159–163 (HDAGH). The chain crosses the membrane as a helical span at residues 172 to 192 (LNKFMGIFAANCLSGISIGWW). The Histidine box-2 signature appears at 196 to 200 (HNAHH). The next 3 helical transmembrane spans lie at 212–232 (LQYI…TSHF), 254–274 (FYPI…IMLL), and 286–306 (LLGC…LPNW). Residues 373 to 377 (QIEHH) carry the Histidine box-3 motif.

The protein belongs to the fatty acid desaturase type 1 family.

Its subcellular location is the endoplasmic reticulum membrane. It catalyses the reaction (9Z,12Z,15Z)-octadecatrienoyl-containing glycerolipid + 2 Fe(II)-[cytochrome b5] + O2 + 2 H(+) = (6Z,9Z,12Z,15Z)-octadecatetraenoyl-containing glycerolipid + 2 Fe(III)-[cytochrome b5] + 2 H2O. It carries out the reaction a (9Z,12Z)-octadecadienoyl-containing glycerolipid + 2 Fe(II)-[cytochrome b5] + O2 + 2 H(+) = (6Z,9Z,12Z)-octadecatrienoyl-containing glycerolipid + 2 Fe(III)-[cytochrome b5] + 2 H2O. It participates in lipid metabolism; polyunsaturated fatty acid biosynthesis. Its function is as follows. Fatty acid desaturase able to introduce a delta(6)-double bond into delta(9)-unsaturated fatty-acid substrates. Can use both linoleic acid (18:2(9Z,12Z)) and alpha-linolenic acid (18:3(9Z,12Z,15Z)) as substrates. This Borago officinalis (Bourrache) protein is Acyl-lipid (9-3)-desaturase.